The primary structure comprises 299 residues: Protease HtpX homolog (299 aa).

2 helical membrane passes run 7–24 (GILMAVMTALFLGVGALI) and 29–46 (GAIIALIVAALMNLFTFW). Position 130 (His-130) interacts with Zn(2+). Glu-131 is an active-site residue. His-134 is a binding site for Zn(2+). The next 2 membrane-spanning stretches (helical) occupy residues 145-165 (VTATFAGAISMLANFAFFFGG) and 174-194 (PVGIVGTLALMILAPLAAGLV). Glu-203 contacts Zn(2+).

Belongs to the peptidase M48B family. It depends on Zn(2+) as a cofactor.

It localises to the cell inner membrane. The chain is Protease HtpX homolog from Cereibacter sphaeroides (strain ATCC 17025 / ATH 2.4.3) (Rhodobacter sphaeroides).